The sequence spans 1250 residues: Nucleoporin pom152 (1250 aa).

The segment at 1-79 (MVTRVASSER…IYLRLLPKFR (79 aa)) is pore side. A helical transmembrane segment spans residues 80–100 (IPWLSFQPAATLLQIAIFAAI). The segment at 101–1250 (NLLLSSLSSL…PQDSTSSSNI (1150 aa)) is cisternal side.

As to quaternary structure, component of the nuclear pore complex (NPC). NPC constitutes the exclusive means of nucleocytoplasmic transport. NPCs allow the passive diffusion of ions and small molecules and the active, nuclear transport receptor-mediated bidirectional transport of macromolecules such as proteins, RNAs, ribonucleoparticles (RNPs), and ribosomal subunits across the nuclear envelope.

The protein resides in the nucleus. It is found in the nuclear pore complex. It localises to the nucleus membrane. Functions as a component of the nuclear pore complex (NPC). NPC components, collectively referred to as nucleoporins (NUPs), can play the role of both NPC structural components and of docking or interaction partners for transiently associated nuclear transport factors. The protein is Nucleoporin pom152 (pom152) of Schizosaccharomyces pombe (strain 972 / ATCC 24843) (Fission yeast).